We begin with the raw amino-acid sequence, 153 residues long: Aspartate carbamoyltransferase regulatory chain (153 aa).

Zn(2+)-binding residues include C109, C114, C138, and C141.

The protein belongs to the PyrI family. In terms of assembly, contains catalytic and regulatory chains. Requires Zn(2+) as cofactor.

Involved in allosteric regulation of aspartate carbamoyltransferase. The sequence is that of Aspartate carbamoyltransferase regulatory chain from Salmonella schwarzengrund (strain CVM19633).